The chain runs to 103 residues: MYAVFQSGGKQHRVSEGQTLRLEKLDVETGATVEFDKVLLVANGEEIAVGAPLVEGGKVTAEVVQHGRGDKVKIVKFRRRKHSRKQAGHRQWFTEVKITGINA.

The protein belongs to the bacterial ribosomal protein bL21 family. Part of the 50S ribosomal subunit. Contacts protein L20.

Its function is as follows. This protein binds to 23S rRNA in the presence of protein L20. This chain is Large ribosomal subunit protein bL21, found in Vibrio atlanticus (strain LGP32) (Vibrio splendidus (strain Mel32)).